The chain runs to 456 residues: Chromosomal replication initiator protein DnaA (456 aa).

Positions 1–79 (MSQEIWADVL…QHPQVSFQVL (79 aa)) are domain I, interacts with DnaA modulators. The domain II stretch occupies residues 79–112 (LPASQDALLLPSDPPPAPISPGRAPAPPPADNRK). Residues 89–112 (PSDPPPAPISPGRAPAPPPADNRK) form a disordered region. The span at 90–108 (SDPPPAPISPGRAPAPPPA) shows a compositional bias: pro residues. The domain III, AAA+ region stretch occupies residues 113 to 329 (TLNPKYTFEN…GALMRVVAFS (217 aa)). Positions 157, 159, 160, and 161 each coordinate ATP. The segment at 330-456 (SLNNVPFSRA…KGLEDEDSRA (127 aa)) is domain IV, binds dsDNA.

Belongs to the DnaA family. Oligomerizes as a right-handed, spiral filament on DNA at oriC.

The protein resides in the cytoplasm. In terms of biological role, plays an essential role in the initiation and regulation of chromosomal replication. ATP-DnaA binds to the origin of replication (oriC) to initiate formation of the DNA replication initiation complex once per cell cycle. Binds the DnaA box (a 9 base pair repeat at the origin) and separates the double-stranded (ds)DNA. Forms a right-handed helical filament on oriC DNA; dsDNA binds to the exterior of the filament while single-stranded (ss)DNA is stabiized in the filament's interior. The ATP-DnaA-oriC complex binds and stabilizes one strand of the AT-rich DNA unwinding element (DUE), permitting loading of DNA polymerase. After initiation quickly degrades to an ADP-DnaA complex that is not apt for DNA replication. Binds acidic phospholipids. The sequence is that of Chromosomal replication initiator protein DnaA from Deinococcus deserti (strain DSM 17065 / CIP 109153 / LMG 22923 / VCD115).